The primary structure comprises 323 residues: Beta-ketoacyl-[acyl-carrier-protein] synthase III (323 aa).

Active-site residues include C114 and H250. The tract at residues 251–255 (QANIR) is ACP-binding. The active site involves N280.

It belongs to the thiolase-like superfamily. FabH family. As to quaternary structure, homodimer.

The protein localises to the cytoplasm. It carries out the reaction malonyl-[ACP] + acetyl-CoA + H(+) = 3-oxobutanoyl-[ACP] + CO2 + CoA. The protein operates within lipid metabolism; fatty acid biosynthesis. Catalyzes the condensation reaction of fatty acid synthesis by the addition to an acyl acceptor of two carbons from malonyl-ACP. Catalyzes the first condensation reaction which initiates fatty acid synthesis and may therefore play a role in governing the total rate of fatty acid production. Possesses both acetoacetyl-ACP synthase and acetyl transacylase activities. Its substrate specificity determines the biosynthesis of branched-chain and/or straight-chain of fatty acids. The polypeptide is Beta-ketoacyl-[acyl-carrier-protein] synthase III (Alkalilimnicola ehrlichii (strain ATCC BAA-1101 / DSM 17681 / MLHE-1)).